The chain runs to 634 residues: Chaperone protein HtpG (634 aa).

The interval 1–344 (MSETATQNKE…SNDLPLNVSR (344 aa)) is a; substrate-binding. The tract at residues 345–561 (EILQDNKVTQ…DFEMGTQMAK (217 aa)) is b. Residues 562-634 (LLEAAGQAAP…GAINELLTKR (73 aa)) are c.

Belongs to the heat shock protein 90 family. In terms of assembly, homodimer.

It localises to the cytoplasm. Its function is as follows. Molecular chaperone. Has ATPase activity. The polypeptide is Chaperone protein HtpG (Vibrio atlanticus (strain LGP32) (Vibrio splendidus (strain Mel32))).